The sequence spans 983 residues: Probable serine/threonine-protein kinase mps1 (983 aa).

Residues 1–18 show a composition bias toward polar residues; sequence MDTHQSFNENQHPNFNSG. Disordered stretches follow at residues 1 to 26, 252 to 430, 441 to 460, 513 to 601, and 654 to 691; these read MDTH…INMN, PQQQ…NNNY, NNDS…NSSV, QQQQ…QQQQ, and QQEQ…SEIV. Positions 253–278 are enriched in low complexity; sequence QQQQQQQQQPYEISSSSSLMSTPASS. A compositionally biased stretch (polar residues) spans 279 to 301; it reads RHLSNRSSIVPTPNSSTKLSESI. Composition is skewed to low complexity over residues 319–329 and 348–371; these read TTTNFNTTTTT and NNNN…SYNK. The span at 374 to 403 shows a compositional bias: acidic residues; it reads NDEDDQDEEDEEEEDEDEDDDEEDEEEYED. The stretch at 380–430 forms a coiled coil; sequence DEEDEEEEDEDEDDDEEDEEEYEDNNNNNNNNNNNNNNNNNNNNNNNNNNY. The segment covering 404–429 has biased composition (low complexity); that stretch reads NNNNNNNNNNNNNNNNNNNNNNNNNN. Residues 474–517 are a coiled coil; the sequence is KLDYENNVKLQQQQQQQQQQQQQQQQQQQQQQQQQYIQQQQQQQ. Residues 529–563 show a composition bias toward low complexity; sequence NNTPTTTTTTTAATNVQNPSSSSSYISPPLSSQSS. A coiled-coil region spans residues 588–665; sequence SKLHQNNLQQ…EQQLKKTNMQ (78 aa). Residues 673–683 are compositionally biased toward low complexity; it reads QPQTQTQQQQK. Residues 714-981 enclose the Protein kinase domain; sequence YLRIEFIGKG…IPTLLNHDFL (268 aa). ATP-binding positions include 720–728 and lysine 742; that span reads IGKGGSGKV. Aspartate 838 functions as the Proton acceptor in the catalytic mechanism.

This sequence belongs to the protein kinase superfamily. Ser/Thr protein kinase family.

It catalyses the reaction L-seryl-[protein] + ATP = O-phospho-L-seryl-[protein] + ADP + H(+). It carries out the reaction L-threonyl-[protein] + ATP = O-phospho-L-threonyl-[protein] + ADP + H(+). This Dictyostelium discoideum (Social amoeba) protein is Probable serine/threonine-protein kinase mps1 (mps1).